Consider the following 526-residue polypeptide: Outer capsid protein VP5 (526 aa).

Residues 1-42 (MGKIIKSLSRFGKKVGNALTSNTAKKIYSTIGKAAERFAESE) form an involved in membrane permeabilization region.

It belongs to the orbivirus VP5 family.

It is found in the virion. VP5 protein is one of the two proteins (with VP2) which constitute the virus particle outer capsid. Acts as a membrane permeabilization protein that mediates release of viral particles from endosomal compartments into the cytoplasm. Permeabilization activity is probably negatively regulated by VP2 and is triggered by endosomal degradation of VP2 and exposure to low pH. This Bluetongue virus 11 (isolate USA) (BTV 11) protein is Outer capsid protein VP5 (Segment-6).